The primary structure comprises 247 residues: Fumarate reductase iron-sulfur subunit (247 aa).

Tyrosine 12 contributes to the a menaquinone binding site. The 2Fe-2S ferredoxin-type domain occupies 14 to 94; that stretch reads PEIESAPTFQ…PGPVRVEPMR (81 aa). The [2Fe-2S] cluster site is built by cysteine 56, cysteine 61, and cysteine 76. One can recognise a 4Fe-4S ferredoxin-type domain in the interval 140–169; sequence LDAFKQFSMCINCMLCYSACPVYALDPDFL. 3 residues coordinate [4Fe-4S] cluster: cysteine 149, cysteine 152, and cysteine 155. The [3Fe-4S] cluster site is built by cysteine 159, cysteine 205, and cysteine 211. A [4Fe-4S] cluster-binding site is contributed by cysteine 215. Residue 226 to 229 coordinates a menaquinone; it reads QRYK.

It belongs to the succinate dehydrogenase/fumarate reductase iron-sulfur protein family. As to quaternary structure, fumarate dehydrogenase forms part of an enzyme complex containing four subunits: a flavoprotein, an iron-sulfur, and two hydrophobic anchor proteins. [2Fe-2S] cluster serves as cofactor. [3Fe-4S] cluster is required as a cofactor. Requires [4Fe-4S] cluster as cofactor.

It is found in the cell membrane. It catalyses the reaction a quinone + succinate = fumarate + a quinol. The catalysed reaction is a menaquinone + succinate = a menaquinol + fumarate. In Mycobacterium tuberculosis (strain CDC 1551 / Oshkosh), this protein is Fumarate reductase iron-sulfur subunit (frdB).